Consider the following 87-residue polypeptide: Keratin-associated protein 19-1 (87 aa).

The tract at residues 6–72 (GYSGGLGYGY…SSYGGYGCGC (67 aa)) is 21 X 2 AA repeats of G-[YCGS].

The protein belongs to the KRTAP type 19 family. In terms of assembly, interacts with hair keratins. Strong expression in narrowly defined pattern restricted to the lower and middle cortical regions of the hair shaft in both developing and cycling hair. During hair follicle regression (catagen), expression levels decrease until expression is no longer detectable in follicles at resting stage (telogen).

Its function is as follows. In the hair cortex, hair keratin intermediate filaments are embedded in an interfilamentous matrix, consisting of hair keratin-associated proteins (KRTAP), which are essential for the formation of a rigid and resistant hair shaft through their extensive disulfide bond cross-linking with abundant cysteine residues of hair keratins. The matrix proteins include the high-sulfur and high-glycine-tyrosine keratins. This chain is Keratin-associated protein 19-1 (Krtap19-1), found in Mus musculus (Mouse).